We begin with the raw amino-acid sequence, 400 residues long: Protein phyllopod (400 aa).

Positions 109-127 (QERTKLRPVAMVRPTVRVQ) are interaction with sina. Positions 125–145 (RVQPQSQPQLQPQVPINPTPA) are disordered. The segment covering 127-138 (QPQSQPQLQPQV) has biased composition (low complexity). Residues 241–320 (YQRFPQPSVD…TAISEVLPTA (80 aa)) are interaction with ttk. Positions 319–362 (TARYQVTHEENKENQQAQEMELELEEEEEVDGRAELEVVQEAEA) form a coiled coil. Positions 346–382 (EEVDGRAELEVVQEAEAPLEPQSHHKQGNSHQNSHQA) are disordered.

Component of some E3 complex at least composed of sina, ebi and phyl, required for the degradation of ttk. As to expression, in embryos, it is ubiquitously present before cellularization. During stages 9-11, it is expressed in neuroblasts and the SOP cells. From stage 12 onward, it decreases, but remains in a subset of PNS cells at stages 12-14. Weakly expressed in wing imaginal disks, in the SOP cells of wing margin bristles, notal macrochaetes, and other sensory organs. In leg disks, it is expressed in the precursors of the femoral chordotonal organs, as well as in external sensory SOP cells. Strongly expressed in the eye-antenna disk, it is specifically expressed in R1, R6 and R7 cells, and not in R3, R3, R4, R5 and R8 cells.

Its subcellular location is the nucleus. Functionally, essential adapter component of E3 ubiquitin ligase complexes; involved in R7 photoreceptor cell differentiation, embryonic nervous system, external sensory organ development and specification of particular muscles. E3 ubiquitin ligase complexes mediate ubiquitination and subsequent proteasomal degradation of target proteins. Required for specification of R7 photoreceptor cell fate in the eye by participating in the ubiquitination and subsequent proteasomal degradation of Tramtrack (ttk), a general inhibitor of photoreceptor differentiation. Acts downstream of Notch signaling to specify the fate of the SOP (sensory organ precursor) cells and their progeny, probably via the sina-mediated proteasomal degradation of ttk. Its restricted pattern of expression, upon Notch and Ras signaling pathways, suggests that it acts as a key determinant in E3 complexes to trigger protein proteolysis in appropriate cells. The chain is Protein phyllopod (phyl) from Drosophila melanogaster (Fruit fly).